The sequence spans 243 residues: NAD-dependent protein deacetylase (243 aa).

One can recognise a Deacetylase sirtuin-type domain in the interval 1–243 (MKHDLETLKH…VSVVKSLMTE (243 aa)). 7 residues coordinate NAD(+): Ala24, Phe35, Arg36, Gln105, Ile107, Asp108, and His123. Phe35 is a nicotinamide binding site. Residues Ile107 and Asp108 each coordinate nicotinamide. The active-site Proton acceptor is His123. The Zn(2+) site is built by Cys131, Cys134, Cys151, and Cys154. Positions 192, 193, 215, and 232 each coordinate NAD(+).

This sequence belongs to the sirtuin family. Class U subfamily. Zn(2+) is required as a cofactor.

The protein localises to the cytoplasm. It carries out the reaction N(6)-acetyl-L-lysyl-[protein] + NAD(+) + H2O = 2''-O-acetyl-ADP-D-ribose + nicotinamide + L-lysyl-[protein]. NAD-dependent protein deacetylase which modulates the activities of several enzymes which are inactive in their acetylated form. In Staphylococcus aureus (strain MRSA252), this protein is NAD-dependent protein deacetylase.